We begin with the raw amino-acid sequence, 111 residues long: Parvalbumin alpha (111 aa).

Thr-1 carries the post-translational modification N-acetylthreonine; in form C2. 2 consecutive EF-hand domains span residues 40–75 (KPDD…FAAG) and 79–111 (LTAN…VKAA). The Ca(2+) site is built by Asp-53, Asp-55, Ser-57, Tyr-59, Glu-61, Glu-64, Asp-92, Asp-94, Asp-96, Lys-98, and Glu-103.

Belongs to the parvalbumin family. In terms of processing, acetylation of Thr-1 converts C1 to C2.

Its function is as follows. In muscle, parvalbumin is thought to be involved in relaxation after contraction. It binds two calcium ions. This Latimeria chalumnae (Coelacanth) protein is Parvalbumin alpha.